A 320-amino-acid polypeptide reads, in one-letter code: Ferrochelatase (320 aa).

His-194 and Glu-275 together coordinate Fe cation.

Belongs to the ferrochelatase family. In terms of assembly, monomer.

The protein resides in the cytoplasm. The catalysed reaction is heme b + 2 H(+) = protoporphyrin IX + Fe(2+). It participates in porphyrin-containing compound metabolism; protoheme biosynthesis; protoheme from protoporphyrin-IX: step 1/1. Its function is as follows. Catalyzes the ferrous insertion into protoporphyrin IX. This Shigella boydii serotype 18 (strain CDC 3083-94 / BS512) protein is Ferrochelatase.